Here is a 527-residue protein sequence, read N- to C-terminus: Fusicoccadiene C-8 hydroxylase (527 aa).

A helical transmembrane segment spans residues 15–35; that stretch reads GKPLLLFLILITLTYSLGIVF. N125 is a glycosylation site (N-linked (GlcNAc...) asparagine). A heme-binding site is contributed by C465. N-linked (GlcNAc...) asparagine glycosylation is present at N496.

This sequence belongs to the cytochrome P450 family. Requires heme as cofactor.

It localises to the membrane. The protein operates within mycotoxin biosynthesis. Functionally, cytochrome P450 monooxygenase; part of the gene cluster that mediates the biosynthesis of the diterpene glucoside brassicicene C. In the first step of the brassicicene C biosynthesis, the bifunctional diterpene synthase bsc8 that possesses both prenyl transferase and terpene cyclase activity, converts isopentenyl diphosphate and dimethylallyl diphosphate into geranylgeranyl diphosphate (GGDP) that is further converted into fusicocca-2,10(14)-diene, the first precursor for brassicicene C. Fusicocca-2,10(14)-diene is then substrate of cytochrome P450 monooxygenase bsc1 for hydroxylation at the C-8 position. Oxidation at C-16 position to aldehyde is then catalyzed by the cytochrome P450 monooyxygenase bsc7, yielding fusicocca-2,10(14)-diene-8-beta,16-diol. Follows the isomerization of the double bond and reduction of aldehyde to alcohol catalyzed by the short-chain dehydrogenase/reductase bsc3 to yield the diol compound fusicocca-1,10(14)-diene-8 beta,16-diol. The next step is the oxidation at the C-3 position of fusicocca-2,10(14)-diene-8-beta,16-diol catalyzed by the alpha-ketoglutarate dependent dioxygenase bsc9, to produce a triol compound. Methylation of the hydroxy group at position 16 is performed by the methyltransferase bsc6. 16-O-methylation is followed by oxidation at the C-13 position to ketone and an alkyl shift of the methyl group leads to brassicicene C. Although the probable acetyltransferase bsc4 is included in the gene cluster, no acetylation reactions are necessary for brassicicene C biosynthesis. However, the fact that brassicicene E, which is a structurally related compound having an acetoxy group at position 12, was previously isolated from another strain of A.brassicicola suggests that the ATCC 96836 strain might also produce a small amount of brassicicene E. The protein is Fusicoccadiene C-8 hydroxylase of Alternaria brassicicola (Dark leaf spot agent).